The sequence spans 292 residues: Poly(U)-specific endoribonuclease-B (292 aa).

One can recognise an EndoU domain in the interval 8–285 (VNHELSKLFN…IGTAYPALLS (278 aa)). Catalysis depends on residues H162, H178, and K224.

Belongs to the ENDOU family. Monomer. The cofactor is Mn(2+).

It localises to the nucleus. It carries out the reaction uridylyl-uridylyl-ribonucleotide-RNA = a 3'-end uridylyl-2',3'-cyclophospho-uridine-RNA + a 5'-end dephospho-ribonucleoside-RNA. In terms of biological role, poly(U)-specific endoribonuclease involved in the processing of intron-encoded box C/D snoRNAs, such as U16 and U86. Releases products that have 2',3'-cyclic phosphate termini at the 3'-end. This Xenopus laevis (African clawed frog) protein is Poly(U)-specific endoribonuclease-B (endou-b).